We begin with the raw amino-acid sequence, 557 residues long: Dihydroxy-acid dehydratase (557 aa).

Asp-78 lines the Mg(2+) pocket. Residue Cys-119 participates in [2Fe-2S] cluster binding. Mg(2+) contacts are provided by Asp-120 and Lys-121. At Lys-121 the chain carries N6-carboxylysine. Residue Cys-194 coordinates [2Fe-2S] cluster. Glu-446 serves as a coordination point for Mg(2+). The Proton acceptor role is filled by Ser-472.

Belongs to the IlvD/Edd family. In terms of assembly, homodimer. The cofactor is [2Fe-2S] cluster. It depends on Mg(2+) as a cofactor.

The enzyme catalyses (2R)-2,3-dihydroxy-3-methylbutanoate = 3-methyl-2-oxobutanoate + H2O. It catalyses the reaction (2R,3R)-2,3-dihydroxy-3-methylpentanoate = (S)-3-methyl-2-oxopentanoate + H2O. The protein operates within amino-acid biosynthesis; L-isoleucine biosynthesis; L-isoleucine from 2-oxobutanoate: step 3/4. It participates in amino-acid biosynthesis; L-valine biosynthesis; L-valine from pyruvate: step 3/4. In terms of biological role, functions in the biosynthesis of branched-chain amino acids. Catalyzes the dehydration of (2R,3R)-2,3-dihydroxy-3-methylpentanoate (2,3-dihydroxy-3-methylvalerate) into 2-oxo-3-methylpentanoate (2-oxo-3-methylvalerate) and of (2R)-2,3-dihydroxy-3-methylbutanoate (2,3-dihydroxyisovalerate) into 2-oxo-3-methylbutanoate (2-oxoisovalerate), the penultimate precursor to L-isoleucine and L-valine, respectively. The protein is Dihydroxy-acid dehydratase of Desulfosudis oleivorans (strain DSM 6200 / JCM 39069 / Hxd3) (Desulfococcus oleovorans).